Consider the following 122-residue polypeptide: Large ribosomal subunit protein uL14 (122 aa).

It belongs to the universal ribosomal protein uL14 family. As to quaternary structure, part of the 50S ribosomal subunit. Forms a cluster with proteins L3 and L19. In the 70S ribosome, L14 and L19 interact and together make contacts with the 16S rRNA in bridges B5 and B8.

In terms of biological role, binds to 23S rRNA. Forms part of two intersubunit bridges in the 70S ribosome. This is Large ribosomal subunit protein uL14 from Clostridium botulinum (strain 657 / Type Ba4).